A 306-amino-acid polypeptide reads, in one-letter code: tRNA N6-adenosine threonylcarbamoyltransferase (306 aa).

2 residues coordinate Fe cation: histidine 110 and histidine 114. Residues 132–136 (IASGK), aspartate 165, glycine 178, aspartate 182, and asparagine 268 contribute to the substrate site. Aspartate 292 is a binding site for Fe cation.

This sequence belongs to the KAE1 / TsaD family. Requires Fe(2+) as cofactor.

The protein resides in the cytoplasm. The enzyme catalyses L-threonylcarbamoyladenylate + adenosine(37) in tRNA = N(6)-L-threonylcarbamoyladenosine(37) in tRNA + AMP + H(+). Required for the formation of a threonylcarbamoyl group on adenosine at position 37 (t(6)A37) in tRNAs that read codons beginning with adenine. Is involved in the transfer of the threonylcarbamoyl moiety of threonylcarbamoyl-AMP (TC-AMP) to the N6 group of A37, together with TsaE and TsaB. TsaD likely plays a direct catalytic role in this reaction. This Malacoplasma penetrans (strain HF-2) (Mycoplasma penetrans) protein is tRNA N6-adenosine threonylcarbamoyltransferase.